The chain runs to 195 residues: ATP-dependent Clp protease proteolytic subunit 2 (195 aa).

Residue serine 95 is the Nucleophile of the active site. Histidine 120 is an active-site residue.

The protein belongs to the peptidase S14 family. Fourteen ClpP subunits assemble into 2 heptameric rings which stack back to back to give a disk-like structure with a central cavity, resembling the structure of eukaryotic proteasomes.

It localises to the cytoplasm. It carries out the reaction Hydrolysis of proteins to small peptides in the presence of ATP and magnesium. alpha-casein is the usual test substrate. In the absence of ATP, only oligopeptides shorter than five residues are hydrolyzed (such as succinyl-Leu-Tyr-|-NHMec, and Leu-Tyr-Leu-|-Tyr-Trp, in which cleavage of the -Tyr-|-Leu- and -Tyr-|-Trp bonds also occurs).. In terms of biological role, cleaves peptides in various proteins in a process that requires ATP hydrolysis. Has a chymotrypsin-like activity. Plays a major role in the degradation of misfolded proteins. The sequence is that of ATP-dependent Clp protease proteolytic subunit 2 from Methylococcus capsulatus (strain ATCC 33009 / NCIMB 11132 / Bath).